A 299-amino-acid polypeptide reads, in one-letter code: HTH-type transcriptional regulator ArgP (299 aa).

The HTH lysR-type domain maps to 2–58; that stretch reads FDYKLLSALAAVIEQAGFERAAQVLGLSQSAISQRIKLLEARVGQPVLVRVTPPAPT. A DNA-binding region (H-T-H motif) is located at residues 19–38; the sequence is FERAAQVLGLSQSAISQRIK.

It belongs to the LysR transcriptional regulatory family. Homodimer.

Controls the transcription of genes involved in arginine and lysine metabolism. The protein is HTH-type transcriptional regulator ArgP of Pseudomonas fluorescens (strain ATCC BAA-477 / NRRL B-23932 / Pf-5).